The primary structure comprises 269 residues: Ubiquinone/menaquinone biosynthesis C-methyltransferase UbiE (269 aa).

S-adenosyl-L-methionine is bound by residues Thr-92, Asp-113, and 141-142 (NA).

Belongs to the class I-like SAM-binding methyltransferase superfamily. MenG/UbiE family.

The enzyme catalyses a 2-demethylmenaquinol + S-adenosyl-L-methionine = a menaquinol + S-adenosyl-L-homocysteine + H(+). The catalysed reaction is a 2-methoxy-6-(all-trans-polyprenyl)benzene-1,4-diol + S-adenosyl-L-methionine = a 5-methoxy-2-methyl-3-(all-trans-polyprenyl)benzene-1,4-diol + S-adenosyl-L-homocysteine + H(+). The protein operates within quinol/quinone metabolism; menaquinone biosynthesis; menaquinol from 1,4-dihydroxy-2-naphthoate: step 2/2. Its pathway is cofactor biosynthesis; ubiquinone biosynthesis. Functionally, methyltransferase required for the conversion of demethylmenaquinol (DMKH2) to menaquinol (MKH2) and the conversion of 2-polyprenyl-6-methoxy-1,4-benzoquinol (DDMQH2) to 2-polyprenyl-3-methyl-6-methoxy-1,4-benzoquinol (DMQH2). The sequence is that of Ubiquinone/menaquinone biosynthesis C-methyltransferase UbiE from Brucella melitensis biotype 2 (strain ATCC 23457).